We begin with the raw amino-acid sequence, 269 residues long: Putative pyruvate, phosphate dikinase regulatory protein (269 aa).

151-158 contributes to the ADP binding site; it reads GISRTSKT.

The protein belongs to the pyruvate, phosphate/water dikinase regulatory protein family. PDRP subfamily.

The catalysed reaction is N(tele)-phospho-L-histidyl/L-threonyl-[pyruvate, phosphate dikinase] + ADP = N(tele)-phospho-L-histidyl/O-phospho-L-threonyl-[pyruvate, phosphate dikinase] + AMP + H(+). It carries out the reaction N(tele)-phospho-L-histidyl/O-phospho-L-threonyl-[pyruvate, phosphate dikinase] + phosphate + H(+) = N(tele)-phospho-L-histidyl/L-threonyl-[pyruvate, phosphate dikinase] + diphosphate. Functionally, bifunctional serine/threonine kinase and phosphorylase involved in the regulation of the pyruvate, phosphate dikinase (PPDK) by catalyzing its phosphorylation/dephosphorylation. This Staphylococcus aureus protein is Putative pyruvate, phosphate dikinase regulatory protein.